The primary structure comprises 388 residues: Envelope protein F13 homolog (388 aa).

Residue G2 is the site of N-myristoyl glycine; by host attachment. A PLD phosphodiesterase domain is found at 310–337 (GDAINNTKLLVVDDEYVHVSNADIDGTH).

Its subcellular location is the virion membrane. It is found in the host endoplasmic reticulum membrane. Envelope protein associated with the inner side of the enveloped virion (EV) membrane. The chain is Envelope protein F13 homolog (P43K) from Molluscum contagiosum virus subtype 2 (MOCV).